The following is a 199-amino-acid chain: RNA pyrophosphohydrolase (199 aa).

Residues 6-154 (GYRPNVGIVL…KREVYELALS (149 aa)) enclose the Nudix hydrolase domain. A Nudix box motif is present at residues 38 to 59 (GGIQHGESPEQAMYRELHEEVG).

The protein belongs to the Nudix hydrolase family. RppH subfamily. Requires a divalent metal cation as cofactor.

In terms of biological role, accelerates the degradation of transcripts by removing pyrophosphate from the 5'-end of triphosphorylated RNA, leading to a more labile monophosphorylated state that can stimulate subsequent ribonuclease cleavage. The chain is RNA pyrophosphohydrolase from Polynucleobacter asymbioticus (strain DSM 18221 / CIP 109841 / QLW-P1DMWA-1) (Polynucleobacter necessarius subsp. asymbioticus).